We begin with the raw amino-acid sequence, 429 residues long: Histidine--tRNA ligase (429 aa).

Belongs to the class-II aminoacyl-tRNA synthetase family. As to quaternary structure, homodimer.

Its subcellular location is the cytoplasm. The catalysed reaction is tRNA(His) + L-histidine + ATP = L-histidyl-tRNA(His) + AMP + diphosphate + H(+). The polypeptide is Histidine--tRNA ligase (Alkalilimnicola ehrlichii (strain ATCC BAA-1101 / DSM 17681 / MLHE-1)).